Here is a 618-residue protein sequence, read N- to C-terminus: Probable N-acetylgalactosaminyltransferase 6 (618 aa).

Residues 1–16 lie on the Cytoplasmic side of the membrane; that stretch reads MIASLIRSRRRSRRCV. A helical; Signal-anchor for type II membrane protein membrane pass occupies residues 17–39; it reads VYSVFLFGFLALWGSFALALVFL. Residues 40–618 lie on the Lumenal side of the membrane; that stretch reads SDMYIGEDQI…TEMSWLPEHP (579 aa). Asparagine 81 and asparagine 149 each carry an N-linked (GlcNAc...) asparagine glycan. 2 cysteine pairs are disulfide-bonded: cysteine 147–cysteine 381 and cysteine 372–cysteine 452. A catalytic subdomain A region spans residues 156 to 267; it reads LPTTSVIIVY…KGWLEPLLTR (112 aa). Residues aspartate 197 and arginine 228 each contribute to the substrate site. Mn(2+) is bound at residue aspartate 251. Residue serine 252 participates in substrate binding. Residue histidine 253 participates in Mn(2+) binding. The catalytic subdomain B stretch occupies residues 327 to 389; that stretch reads PIESPTMAGG…PCSHVGHVFR (63 aa). Tryptophan 358 lines the substrate pocket. Histidine 386 contributes to the Mn(2+) binding site. Arginine 389 provides a ligand contact to substrate. A Ricin B-type lectin domain is found at 474–609; it reads RFGRMTSSSN…SNDRQNWTIT (136 aa). A glycan (N-linked (GlcNAc...) asparagine) is linked at asparagine 483. Cystine bridges form between cysteine 487-cysteine 505, cysteine 530-cysteine 550, and cysteine 575-cysteine 597. The N-linked (GlcNAc...) asparagine glycan is linked to asparagine 605.

It belongs to the glycosyltransferase 2 family. GalNAc-T subfamily. Requires Mn(2+) as cofactor.

It localises to the golgi apparatus membrane. It participates in protein modification; protein glycosylation. Its function is as follows. Probable glycopeptide transferase involved in O-linked oligosaccharide biosynthesis. Glycopeptide transferases catalyze the transfer of an N-acetyl-D-galactosamine residue to an already glycosylated peptide. In contrast to other members of the family, it does not act as a peptide transferase that transfers GalNAc onto serine or threonine residue on peptides that have been tested. Some peptide transferase activity is however not excluded, considering that its appropriate peptide substrate may remain unidentified. The chain is Probable N-acetylgalactosaminyltransferase 6 (gly-6) from Caenorhabditis elegans.